The sequence spans 635 residues: MAPKKNKAAKKSKADINEMTIMVEDSPSNKINGLNTLLEGGNGFSCISTEVTDPVYAPNLLEGLGHMRQDSFLCDLTVATKSKSFDVHKVVMASCSEYIQNMLRKDPSLKKIELSDLSPVGLATVITYAYSGKLTLSLYTIGSTISAALLLQIHTLVKMCSDFLMRETSVENCMYVVNIADTYNLKETKEAAQKFMRENFIEFSEMEQFLKLTYEQINEFLTDDSLQLPSELTAFQIAVKWLDFDEKRLKYAPDLLSNIRFGTITPQDLVSHVQNVPRMMQDAECHRLLVDAMNYHLLPFQQNILQSRRTKVRGGLRVLLTVGGRPALTEKSLSKDILYRDEDNVWNKLTEMPAKSFNQCVAVLDGFLYVAGGEDQNDARNQAKHAVSNFSRYDPRFNTWIHLANMIQKRTHFSLNTFNGLLFAVGGRNSDGCQASVECYVPSSNQWQMKAPMEVPRCCHASSVIDGKILVSGGYINNAYSRAVCSYDPSTDSWQDKNSLSSPRGWHCSVTVGDRAYVLGGSQLGGRGERVDVLPVECYNPHSGQWSYVAPLLTGVSTAGAATLNNKIYLLGGWNEIEKKYKKCIQVYNPDLNEWTEDDELPEATVGISCCVVTIPTRKTRESRASSVSSAPVSI.

Positions 74–138 (CDLTVATKSK…AYSGKLTLSL (65 aa)) constitute a BTB domain. The BACK domain occupies 173 to 274 (CMYVVNIADT…TPQDLVSHVQ (102 aa)). Kelch repeat units lie at residues 318–366 (VLLT…VLDG), 367–420 (FLYV…TFNG), 421–467 (LLFA…VIDG), 469–514 (ILVS…TVGD), 516–566 (AYVL…TLNN), and 567–615 (KIYL…VVTI).

In terms of tissue distribution, strongly expressed in fast skeletal muscle, and weakly in heart. Not expressed in other tissues.

In Danio rerio (Zebrafish), this protein is Kelch-like protein 31 (klhl31).